Consider the following 240-residue polypeptide: Eukaryotic translation initiation factor 3 subunit J (240 aa).

A disordered region spans residues 19–95 (KADVNKWAGE…FANMTPEQQL (77 aa)). Residues 28–45 (EDEDDVKDNWEDDDEEEE) are compositionally biased toward acidic residues. The span at 46-56 (KKDAPKQEDTP) shows a compositional bias: basic and acidic residues. Residues 60–71 (AKPKKAAQQKKL) are compositionally biased toward basic residues. Coiled-coil stretches lie at residues 63–90 (KKAA…ANMT) and 176–235 (SNNI…DYDD). Positions 72 to 81 (KKEDLERLQR) are enriched in basic and acidic residues.

Belongs to the eIF-3 subunit J family. In terms of assembly, component of the eukaryotic translation initiation factor 3 (eIF-3) complex.

It is found in the cytoplasm. In terms of biological role, component of the eukaryotic translation initiation factor 3 (eIF-3) complex, which is involved in protein synthesis of a specialized repertoire of mRNAs and, together with other initiation factors, stimulates binding of mRNA and methionyl-tRNAi to the 40S ribosome. The eIF-3 complex specifically targets and initiates translation of a subset of mRNAs involved in cell proliferation. The sequence is that of Eukaryotic translation initiation factor 3 subunit J from Anopheles gambiae (African malaria mosquito).